We begin with the raw amino-acid sequence, 80 residues long: MKPGIHPEYREVVFQDIGADFSFLTRSTIAAKETIKWTDGKEYPLVKIEVSSQSHPFYTGKQKILDTAGRVEKFRQKYGM.

Belongs to the bacterial ribosomal protein bL31 family. Type B subfamily. Part of the 50S ribosomal subunit.

In Methylobacillus flagellatus (strain ATCC 51484 / DSM 6875 / VKM B-1610 / KT), this protein is Large ribosomal subunit protein bL31B.